We begin with the raw amino-acid sequence, 147 residues long: UPF0178 protein Nther_1836 (147 aa).

This sequence belongs to the UPF0178 family.

The polypeptide is UPF0178 protein Nther_1836 (Natranaerobius thermophilus (strain ATCC BAA-1301 / DSM 18059 / JW/NM-WN-LF)).